The chain runs to 436 residues: Forkhead box protein I3 (436 aa).

Ser132 is modified (phosphoserine). The fork-head DNA-binding region spans 158–252 (RPPYSYSALI…DNGNFRRKRK (95 aa)). The short motif at 248–254 (RRKRKRR) is the Nuclear localization signal element. 2 disordered regions span residues 249–319 (RKRK…PGGS) and 340–410 (SSSG…SGGQ). Low complexity predominate over residues 257-277 (ASSASTSTVAAGTTKSEEGLS). Residues 278–287 (SGLGSGVGGK) are compositionally biased toward gly residues. Ser292 and Ser302 each carry phosphoserine. Low complexity predominate over residues 385–410 (SNGASSGSGQRSSYYSPFPASTSGGQ). The short motif at 422 to 430 (SMVNSLIYP) is the 9aaTAD element.

Phosphorylation promotes the transcription factor activity. Dephosphorylation by protein phosphatase 2A (PP2A) reduces its activity.

Its subcellular location is the nucleus. Functionally, transcription factor required for pharyngeal arch development, and which is involved in hair, ear, jaw and dental development. May act as a pioneer transcription factor during pharyngeal arch development. Required for the development of the epithelium of hair and whisker placodes and that of teeth. Required for hair follicle stem cell specification. Acts downstream of TBX1 for the formation of the thymus and parathyroid glands from the third pharyngeal pouch. The polypeptide is Forkhead box protein I3 (Canis lupus familiaris (Dog)).